A 59-amino-acid chain; its full sequence is Large ribosomal subunit protein bL32 (59 aa).

A compositionally biased stretch (basic residues) spans 1–16; sequence MAVPKRKTSPSKRGMR. A disordered region spans residues 1 to 59; that stretch reads MAVPKRKTSPSKRGMRRSADALKAPTYVEDKNSGELRRPHHIDLKSGMYRGRQVLEAKE. The span at 28–44 shows a compositional bias: basic and acidic residues; the sequence is VEDKNSGELRRPHHIDL.

Belongs to the bacterial ribosomal protein bL32 family.

The chain is Large ribosomal subunit protein bL32 from Brucella anthropi (strain ATCC 49188 / DSM 6882 / CCUG 24695 / JCM 21032 / LMG 3331 / NBRC 15819 / NCTC 12168 / Alc 37) (Ochrobactrum anthropi).